The sequence spans 122 residues: MARIAGVDLPRNKHVEIALTYIYGIGRTRSQQILEKVGINPTLKSDALTEEQVNDIRKVIDSDFKVEGELRTQISMNIKRLMDLGCYRGLRHRKSLPCRGQRTSTNARTRKGPKRAAVKKKK.

Residues 95 to 122 (SLPCRGQRTSTNARTRKGPKRAAVKKKK) form a disordered region. The segment covering 108–122 (RTRKGPKRAAVKKKK) has biased composition (basic residues).

Belongs to the universal ribosomal protein uS13 family. As to quaternary structure, part of the 30S ribosomal subunit. Forms a loose heterodimer with protein S19. Forms two bridges to the 50S subunit in the 70S ribosome.

In terms of biological role, located at the top of the head of the 30S subunit, it contacts several helices of the 16S rRNA. In the 70S ribosome it contacts the 23S rRNA (bridge B1a) and protein L5 of the 50S subunit (bridge B1b), connecting the 2 subunits; these bridges are implicated in subunit movement. Contacts the tRNAs in the A and P-sites. This Desulforapulum autotrophicum (strain ATCC 43914 / DSM 3382 / VKM B-1955 / HRM2) (Desulfobacterium autotrophicum) protein is Small ribosomal subunit protein uS13.